A 225-amino-acid polypeptide reads, in one-letter code: ATP synthase subunit a (225 aa).

The next 6 helical transmembrane spans lie at Leu18 to Leu38, Ile73 to Ile93, Met100 to Ile120, Met126 to Ile146, Gly156 to Leu176, and Ile187 to Met207.

The protein belongs to the ATPase A chain family. F-type ATPases have 2 components, CF(1) - the catalytic core - and CF(0) - the membrane proton channel. CF(1) has five subunits: alpha(3), beta(3), gamma(1), delta(1), epsilon(1). CF(0) has three main subunits: a, b and c.

Its subcellular location is the mitochondrion inner membrane. Mitochondrial membrane ATP synthase (F(1)F(0) ATP synthase or Complex V) produces ATP from ADP in the presence of a proton gradient across the membrane which is generated by electron transport complexes of the respiratory chain. F-type ATPases consist of two structural domains, F(1) - containing the extramembraneous catalytic core and F(0) - containing the membrane proton channel, linked together by a central stalk and a peripheral stalk. During catalysis, ATP synthesis in the catalytic domain of F(1) is coupled via a rotary mechanism of the central stalk subunits to proton translocation. Key component of the proton channel; it may play a direct role in the translocation of protons across the membrane. The chain is ATP synthase subunit a (ATP6) from Locusta migratoria (Migratory locust).